Reading from the N-terminus, the 665-residue chain is DNA mismatch repair protein MutL (665 aa).

Polar residues-rich tracts occupy residues 348–361 and 407–421; these read LEAT…NGLS and PSSQ…NSRY. 2 disordered regions span residues 348–370 and 385–445; these read LEAT…AEEG and VHRG…STSA. Over residues 426–445 the composition is skewed to low complexity; the sequence is YSTNAASTNTASNYSHSTSA.

Belongs to the DNA mismatch repair MutL/HexB family.

Functionally, this protein is involved in the repair of mismatches in DNA. It is required for dam-dependent methyl-directed DNA mismatch repair. May act as a 'molecular matchmaker', a protein that promotes the formation of a stable complex between two or more DNA-binding proteins in an ATP-dependent manner without itself being part of a final effector complex. The sequence is that of DNA mismatch repair protein MutL from Shewanella denitrificans (strain OS217 / ATCC BAA-1090 / DSM 15013).